We begin with the raw amino-acid sequence, 361 residues long: Peptide chain release factor 1 (361 aa).

Glutamine 236 carries the N5-methylglutamine modification. Basic and acidic residues predominate over residues 285-309 (NAKDSARAADRKAQVGSGDRSERIR). The segment at 285-312 (NAKDSARAADRKAQVGSGDRSERIRTYN) is disordered.

The protein belongs to the prokaryotic/mitochondrial release factor family. Methylated by PrmC. Methylation increases the termination efficiency of RF1.

It localises to the cytoplasm. In terms of biological role, peptide chain release factor 1 directs the termination of translation in response to the peptide chain termination codons UAG and UAA. The chain is Peptide chain release factor 1 from Methylobacterium radiotolerans (strain ATCC 27329 / DSM 1819 / JCM 2831 / NBRC 15690 / NCIMB 10815 / 0-1).